Consider the following 323-residue polypeptide: Olfactory receptor 52B2 (323 aa).

At 1-27 (MSHTNVTIFHPAVFVLPGIPGLEAYHI) the chain is on the extracellular side. N-linked (GlcNAc...) asparagine glycosylation occurs at Asn5. A helical transmembrane segment spans residues 28 to 48 (WLSIPLCLIYITAVLGNSILI). Over 49-56 (VVIVMERN) the chain is Cytoplasmic. A helical membrane pass occupies residues 57–77 (LHVPMYFFLSMLAVMDILLST). The Extracellular segment spans residues 78–101 (TTVPKALAIFWLQAHNIAFDACVT). The cysteines at positions 99 and 191 are disulfide-linked. Residues 102 to 122 (QGFFVHMMFVGESAILLAMAF) traverse the membrane as a helical segment. Topologically, residues 123-141 (DRFVAICAPLRYTTVLTWP) are cytoplasmic. A helical membrane pass occupies residues 142–162 (VVGRIALAVITRSFCIIFPVI). Residues 163-198 (FLLKRLPFCLTNIVPHSYCEHIGVARLACADITVNI) are Extracellular-facing. A helical membrane pass occupies residues 199-219 (WYGFSVPIVMVILDVILIAVS). At 220-239 (YSLILRAVFRLPSQDARHKA) the chain is on the cytoplasmic side. The helical transmembrane segment at 240 to 260 (LSTCGSHLCVILMFYVPSFFT) threads the bilayer. Residues 261–275 (LLTHHFGRNIPQHVH) lie on the Extracellular side of the membrane. A helical membrane pass occupies residues 276–296 (ILLANLYVAVPPMLNPIVYGV). At 297 to 323 (KTKQIREGVAHRFFDIKTWCCTSPLGS) the chain is on the cytoplasmic side.

It belongs to the G-protein coupled receptor 1 family.

The protein resides in the cell membrane. Functionally, odorant receptor. The chain is Olfactory receptor 52B2 (OR52B2) from Homo sapiens (Human).